The sequence spans 2944 residues: Collagen alpha-1(VII) chain (2944 aa).

Positions 1–24 are cleaved as a signal peptide; it reads MRLRLLVAALCAAEILMGAPEVWA. The interval 18–1254 is nonhelical region (NC1); the sequence is GAPEVWAQPR…TGPCAVHCPK (1237 aa). Residues 39 to 212 form the VWFA 1 domain; the sequence is DIVFLLDGSS…SILRTLLPLI (174 aa). Fibronectin type-III domains are found at residues 235 to 330, 331 to 417, 418 to 508, 511 to 598, 601 to 688, 689 to 776, 779 to 867, 870 to 957, and 959 to 1053; these read GPRD…TAKE, GLEL…TASS, VEQT…LEQL, PVMN…DPEA, VVPG…DPLG, PVRR…APEP, SVSK…PPAT, LLET…EPSH, and PSTE…SHGP. The N-linked (GlcNAc...) asparagine glycan is linked to asparagine 338. N-linked (GlcNAc...) asparagine glycosylation occurs at asparagine 787. The VWFA 2 domain maps to 1055–1230; the sequence is DVVFLLHATR…PGLDRAVSDL (176 aa). N-linked (GlcNAc...) asparagine glycosylation occurs at asparagine 1110. The short motif at 1171 to 1173 is the Cell attachment site element; it reads RGD. The interrupted collagenous region stretch occupies residues 1255-1475; the sequence is GQKGEPGVTG…GLRGAPGMTG (221 aa). Positions 1255–2775 are triple-helical region; it reads GQKGEPGVTG…GPRGEKGEAA (1521 aa). Disordered stretches follow at residues 1259–1934 and 1960–2773; these read EPGV…GSLP and SSGS…EKGE. The segment covering 1338 to 1352 has biased composition (low complexity); it reads RGPQGPKGEPGEPGQ. Gly residues predominate over residues 1353 to 1363; the sequence is ITGGGGPGFPG. Composition is skewed to basic and acidic residues over residues 1397–1406 and 1439–1448; these read KGDKGDRGER and PGEKGEKGDC. Over residues 1507–1518 the composition is skewed to low complexity; sequence PGAAGHPGVEGP. 3 stretches are compositionally biased toward basic and acidic residues: residues 1527–1536, 1627–1639, and 1666–1680; these read RRGEKGEPGR, RGRD…KGDE, and VGEK…EDGR. Residues 1813–1822 are compositionally biased toward pro residues; sequence PPGPPGPPGV. 3 stretches are compositionally biased toward basic and acidic residues: residues 1846–1855, 1862–1871, and 1968–1984; these read EDGRKGEKGD, EGPDGPKGER, and PERR…RGPP. The short motif at 2002-2004 is the Cell attachment site element; sequence RGD. Residues 2040 to 2049 are compositionally biased toward gly residues; sequence GRAGGSGEAG. The segment covering 2050–2068 has biased composition (basic and acidic residues); the sequence is RPGERGERGEKGERGDQGR. The Cell attachment site signature appears at 2063–2065; that stretch reads RGD. A compositionally biased stretch (pro residues) spans 2074-2083; the sequence is LPGPPGPPGP. Residues 2130 to 2140 show a composition bias toward basic and acidic residues; the sequence is DVGEPGKRGHD. 4-hydroxyproline occurs at positions 2158, 2167, 2176, and 2179. Low complexity-rich tracts occupy residues 2182–2197, 2226–2241, 2279–2299, and 2306–2317; these read PGLA…SGLK, SGLV…PGQV, PKGE…PPGA, and PGDLAGALLGEP. Basic and acidic residues predominate over residues 2319–2335; that stretch reads AKGDRGLPGPRGEKGEA. Residues 2414–2427 are compositionally biased toward low complexity; the sequence is ERGLAGPPGREGAP. 2 stretches are compositionally biased toward basic and acidic residues: residues 2462–2477 and 2525–2544; these read RGER…DGHP and AKGD…KGPR. Over residues 2576–2594 the composition is skewed to low complexity; it reads PKGEPGAAGIPGEPGAPGK. Positions 2601–2603 match the Cell attachment site motif; it reads RGD. The segment covering 2615–2636 has biased composition (basic and acidic residues); sequence LKGEKGIKGTCGRDGERGDKGE. Residues lysine 2616 and lysine 2622 each carry the 5-hydroxylysine modification. A Cell attachment site motif is present at residues 2631 to 2633; that stretch reads RGD. A 4-hydroxyproline mark is found at proline 2655, proline 2658, and proline 2664. Positions 2695–2704 are enriched in gly residues; sequence GPPGVGGFPG. A nonhelical region (NC2) region spans residues 2776 to 2944; it reads LTEDDIRDFV…GVHSQKTGAA (169 aa). A BPTI/Kunitz inhibitor domain is found at 2879 to 2931; the sequence is CSLPLDEGSCTAYTLRWYHRAVPGGTACHPFVYGGCGGNANRFGTREACERRC. Intrachain disulfides connect cysteine 2879–cysteine 2931, cysteine 2888–cysteine 2914, and cysteine 2906–cysteine 2927.

Homotrimer. Interacts with MIA3/TANGO1; facilitating its loading into transport carriers and subsequent secretion. In terms of processing, prolines at the third position of the tripeptide repeating unit (G-X-Y) are hydroxylated in some or all of the chains.

Its subcellular location is the secreted. The protein resides in the extracellular space. It localises to the extracellular matrix. It is found in the basement membrane. In terms of biological role, stratified squamous epithelial basement membrane protein that forms anchoring fibrils which may contribute to epithelial basement membrane organization and adherence by interacting with extracellular matrix (ECM) proteins such as type IV collagen. This is Collagen alpha-1(VII) chain from Mus musculus (Mouse).